The sequence spans 645 residues: Zinc finger protein 64 (645 aa).

3 C2H2-type zinc fingers span residues 175–197, 203–225, and 231–253; these read HKCEVCGKCFSRKDKLKTHMRCH, YKCKTCDYAAADSSSLNKHLRIH, and FKCQICPYASRNSSQLTVHLRSH. Residue Glu286 forms a Glycyl lysine isopeptide (Lys-Gly) (interchain with G-Cter in SUMO2) linkage. The C2H2-type 4; atypical zinc-finger motif lies at 299–324; it reads FNCCYPGCHFKTVHGMKDLDRHLRIH. C2H2-type zinc fingers lie at residues 330–352, 358–380, 386–408, 414–436, 442–465, 467–489, 495–517, 523–546, and 580–602; these read HKCEFCDKCFSRKDNLTMHMRCH, HKCHLCDYAAVDSSSLKKHLRIH, YKCQLCPYASRNSSQLTVHLRSH, FQCWLCSAKFKISSDLKRHMIVH, FKCEFCDVRCTMKANLKSHIRIKH, FKCLHCAFQGRDRADLLEHSRLH, EKCPECSYSCSSAAALRVHSRVH, FKCDFCSFDTKRPSSLAKHVDKVH, and FRCETCGASFVRDDSLRCHKKQH. Asn397 is covalently cross-linked (Glycyl lysine isopeptide (Lys-Gly) (interchain with G-Cter in SUMO2)). Basic and acidic residues-rich tracts occupy residues 543–554 and 600–610; these read DKVHRDEAKTEN and KQHSDQSENKN. Disordered regions lie at residues 543 to 567 and 600 to 645; these read DKVHRDEAKTENRAPLGKEGLREGS and KQHS…SQDL. Val545 bears the Phosphoserine mark. Positions 622 to 631 are enriched in polar residues; it reads ASGQLSTLVS.

Belongs to the krueppel C2H2-type zinc-finger protein family. In terms of assembly, interacts with ZNF70; this interaction promote the transactivation of the HES1 gene. Interacts with NOTCH1.

The protein resides in the nucleus. Functionally, may be involved in the regulation of mesenchymal cell differentiation through transactivation of NOTCH1 target genes. This Homo sapiens (Human) protein is Zinc finger protein 64.